Here is a 372-residue protein sequence, read N- to C-terminus: Ribosomal RNA small subunit methyltransferase H (372 aa).

S-adenosyl-L-methionine is bound by residues Gly-78 to His-80, Asp-97, Tyr-124, Asp-148, and Gln-155.

It belongs to the methyltransferase superfamily. RsmH family.

Its subcellular location is the cytoplasm. It carries out the reaction cytidine(1402) in 16S rRNA + S-adenosyl-L-methionine = N(4)-methylcytidine(1402) in 16S rRNA + S-adenosyl-L-homocysteine + H(+). Functionally, specifically methylates the N4 position of cytidine in position 1402 (C1402) of 16S rRNA. This Mycobacterium leprae (strain Br4923) protein is Ribosomal RNA small subunit methyltransferase H.